The chain runs to 418 residues: Metal tolerance protein 1 (418 aa).

Residues 1 to 56 (MDSHNSAPPQIAEVRMDISSSTSVAAGNKVCRGAACDFSDSSNSSKDARERMASMR) are Cytoplasmic-facing. Residues 57-77 (KLIIAVILCIIFMAVEVVGGI) form a helical membrane-spanning segment. The Vacuolar segment spans residues 78–89 (KANSLAILTDAA). The helical transmembrane segment at 90–110 (HLLSDVAAFAISLFSLWAAGW) threads the bilayer. Topologically, residues 111 to 122 (EATPQQSYGFFR) are cytoplasmic. The helical transmembrane segment at 123–143 (IEILGALVSIQLIWLLAGILV) threads the bilayer. Topologically, residues 144-160 (YEAIVRLINESGEVQGS) are vacuolar. Residues 161 to 181 (LMFAVSAFGLFVNIIMAVLLG) traverse the membrane as a helical segment. The required for zinc-binding stretch occupies residues 182–246 (HDHGHGHGHG…HHPGTGHHHH (65 aa)). The Cytoplasmic segment spans residues 182 to 282 (HDHGHGHGHG…RRNINVHSAY (101 aa)). The tract at residues 186–248 (HGHGHGHGHG…PGTGHHHHDA (63 aa)) is disordered. Basic and acidic residues predominate over residues 196-227 (HSHDHDHGGSDHDHHHHEDQEHGHVHHHEDGH). The segment covering 235 to 245 (LHHHPGTGHHH) has biased composition (basic residues). The helical transmembrane segment at 283–303 (LHVLGDSIQSIGVMIGGAIIW) threads the bilayer. Over 304-307 (YKPE) the chain is Vacuolar. Residues 308 to 328 (WKIIDLICTLIFSVIVLFTTI) form a helical membrane-spanning segment. The Cytoplasmic segment spans residues 329–418 (KMLRNILEVL…SHVTIQIERE (90 aa)).

The protein belongs to the cation diffusion facilitator (CDF) transporter (TC 2.A.4) family. SLC30A subfamily.

The protein localises to the vacuole membrane. Its function is as follows. Involved in sequestration of excess zinc in the cytoplasm into vacuoles to maintain zinc homeostasis. This Oryza sativa subsp. japonica (Rice) protein is Metal tolerance protein 1 (MTP1).